The chain runs to 213 residues: Na(+)-translocating NADH-quinone reductase subunit E (213 aa).

Helical transmembrane passes span 12–32 (AVFV…FLAV), 40–60 (IGLG…NQLI), 92–112 (FLGF…LEMF), 124–144 (LGIF…SLFM), 155–175 (VVFG…LAGI), and 191–211 (LGIT…FSGI).

It belongs to the NqrDE/RnfAE family. Composed of six subunits; NqrA, NqrB, NqrC, NqrD, NqrE and NqrF.

Its subcellular location is the cell inner membrane. The catalysed reaction is a ubiquinone + n Na(+)(in) + NADH + H(+) = a ubiquinol + n Na(+)(out) + NAD(+). Functionally, NQR complex catalyzes the reduction of ubiquinone-1 to ubiquinol by two successive reactions, coupled with the transport of Na(+) ions from the cytoplasm to the periplasm. NqrA to NqrE are probably involved in the second step, the conversion of ubisemiquinone to ubiquinol. In Rhodopirellula baltica (strain DSM 10527 / NCIMB 13988 / SH1), this protein is Na(+)-translocating NADH-quinone reductase subunit E.